We begin with the raw amino-acid sequence, 62 residues long: Large ribosomal subunit protein bL28 (62 aa).

This sequence belongs to the bacterial ribosomal protein bL28 family.

The polypeptide is Large ribosomal subunit protein bL28 (Ruminiclostridium cellulolyticum (strain ATCC 35319 / DSM 5812 / JCM 6584 / H10) (Clostridium cellulolyticum)).